A 377-amino-acid polypeptide reads, in one-letter code: P2Y purinoceptor 2 (377 aa).

Residues 1–32 (MAADLGPWNDTINGTWDGDELGYRCRFNEDFK) are Extracellular-facing. 2 N-linked (GlcNAc...) asparagine glycosylation sites follow: N9 and N13. The chain crosses the membrane as a helical span at residues 33-59 (YVLLPVSYGVVCVPGLCLNAVALYIFL). Topologically, residues 60-70 (CRLKTWNASTT) are cytoplasmic. A helical membrane pass occupies residues 71-93 (YMFHLAVSDALYAASLPLLVYYY). Residues 94–110 (ARGDHWPFSTVLCKLVR) lie on the Extracellular side of the membrane. A disulfide bridge connects residues C106 and C183. The chain crosses the membrane as a helical span at residues 111–129 (FLFYTNLYCSILFLTCISV). The Cytoplasmic segment spans residues 130-152 (HRCLGVLRPLRSLRWGRARYARR). Residues 153–172 (VAGAVWVLVLACQAPVLYFV) traverse the membrane as a helical segment. Topologically, residues 173 to 194 (TTSARGGRVTCHDTSAPELFSR) are extracellular. Residues 195–220 (FVAYSSVMLGLLFAVPFAVILVCYVL) traverse the membrane as a helical segment. At 221–246 (MARRLLKPAYGTSGGLPRAKRKSVRT) the chain is on the cytoplasmic side. Residues 247 to 269 (IAVVLAVFALCFLPFHVTRTLYY) form a helical membrane-spanning segment. Over 270–287 (SFRSLDLSCHTLNAINMA) the chain is Extracellular. A helical membrane pass occupies residues 288-309 (YKVTRPLASANSCLDPVLYFLA). Residues 310 to 377 (GQRLVRFARD…GSENTKDIRL (68 aa)) are Cytoplasmic-facing. Residues 318–377 (RDAKPPTGPSPATPARRRLGLRRSDRTDMQRIEDVLGSSEDSRRTESTPAGSENTKDIRL) form a disordered region. Positions 339 to 363 (RRSDRTDMQRIEDVLGSSEDSRRTE) are enriched in basic and acidic residues.

This sequence belongs to the G-protein coupled receptor 1 family. As to expression, spleen, testis, kidney, liver, lung, heart and brain.

The protein localises to the cell membrane. Receptor for ATP and UTP coupled to G-proteins that activate a phosphatidylinositol-calcium second messenger system. The affinity range is UTP = ATP &gt; ATP-gamma-S &gt;&gt; 2-methylthio-ATP = ADP. This Homo sapiens (Human) protein is P2Y purinoceptor 2 (P2RY2).